Consider the following 559-residue polypeptide: Protochlorophyllide-dependent translocon component 52, chloroplastic (559 aa).

The N-terminal 55 residues, 1-55 (MEAALAACALPSLRILNTKPRFRCSFSNPSLPISPNSLITRKSSRFTTAVSSPPS), are a transit peptide targeting the chloroplast. Residues 44–70 (SRFTTAVSSPPSSSAATSTNSPPEPEA) are disordered. Low complexity predominate over residues 47–64 (TTAVSSPPSSSAATSTNS). The Rieske domain maps to 85–195 (WYPVMPICDL…STVQHEIIWF (111 aa)). [2Fe-2S] cluster is bound by residues Cys-127, His-129, Cys-147, and His-150. Positions 248 and 253 each coordinate Fe cation. The Redox-active motif signature appears at 483–486 (CSSC). The next 2 membrane-spanning stretches (helical) occupy residues 493–513 (LNAL…VMAV) and 525–545 (IAVL…SHFI).

[2Fe-2S] cluster is required as a cofactor.

Its subcellular location is the plastid. The protein localises to the chloroplast inner membrane. It catalyses the reaction protochlorophyllide a + 4 reduced [2Fe-2S]-[ferredoxin] + 2 O2 + 5 H(+) = protochlorophyllide b + 4 oxidized [2Fe-2S]-[ferredoxin] + 3 H2O. With respect to regulation, down-regulated by light. Part of a translocon most abundantly expressed in etiolated plants and involved in the protochlorophyllide-dependent import of the precursor NADPH:protochlorophyllide oxidoreductase A (pPORA). The sequence is that of Protochlorophyllide-dependent translocon component 52, chloroplastic from Arabidopsis thaliana (Mouse-ear cress).